Consider the following 373-residue polypeptide: MTDNSKIRVVVGMSGGVDSSVTALLLKEQGYDVIGVFMKNWDDTDEFGVCTATEDYKDVAAVADQIGIPYYSVNFEKEYWDRVFEYFLAEYRAGRTPNPDVMCNKEIKFKAFLDYAMTLGADYVATGHYAQVKRDENGTVHMLRGADNGKDQTYFLSQLSQEQLQKTLFPLGHLQKSEVREIAERAGLATAKKKDSTGICFIGEKNFKQFLSQYLPAQKGRMMTIDGRDMGEHAGLMYYTIGQRGGLGIGGQHGGDNQPWFVVGKDLSQNILYVGQGFYHEALMSNSLDASVIHFTREMPEEFTFECTAKFRYRQPDSQVTVHVRGDKAEVVFAEPQRAITPGQAVVFYDGKECLGGGMIDMAYKNGQPCQYI.

ATP contacts are provided by residues 12 to 19 (GMSGGVDS) and methionine 38. The interval 98-100 (NPD) is interaction with target base in tRNA. Catalysis depends on cysteine 103, which acts as the Nucleophile. A disulfide bridge links cysteine 103 with cysteine 200. Glycine 127 serves as a coordination point for ATP. The tract at residues 150–152 (KDQ) is interaction with tRNA. The active-site Cysteine persulfide intermediate is the cysteine 200. Residues 312–313 (RY) are interaction with tRNA.

This sequence belongs to the MnmA/TRMU family.

The protein resides in the cytoplasm. It catalyses the reaction S-sulfanyl-L-cysteinyl-[protein] + uridine(34) in tRNA + AH2 + ATP = 2-thiouridine(34) in tRNA + L-cysteinyl-[protein] + A + AMP + diphosphate + H(+). Functionally, catalyzes the 2-thiolation of uridine at the wobble position (U34) of tRNA, leading to the formation of s(2)U34. The sequence is that of tRNA-specific 2-thiouridylase MnmA from Streptococcus pyogenes serotype M6 (strain ATCC BAA-946 / MGAS10394).